Consider the following 456-residue polypeptide: NADPH-ferredoxin reductase FprA (456 aa).

FAD-binding residues include Ser-17, Glu-43, Leu-51, and Val-87. Residues Arg-113, 158-161 (NGNV), 202-203 (RR), and Glu-214 each bind NADP(+). Residues Trp-362 and 369 to 371 (GVI) contribute to the FAD site. Gly-369 lines the NADP(+) pocket.

This sequence belongs to the ferredoxin--NADP reductase type 1 family. In terms of assembly, monomer. Requires FAD as cofactor.

It catalyses the reaction 2 reduced [2Fe-2S]-[ferredoxin] + NADP(+) + H(+) = 2 oxidized [2Fe-2S]-[ferredoxin] + NADPH. May serve as electron transfer protein and supply electrons to P450 systems. This is NADPH-ferredoxin reductase FprA (fprA) from Mycobacterium leprae (strain TN).